Here is a 248-residue protein sequence, read N- to C-terminus: 4-hydroxy-tetrahydrodipicolinate reductase (248 aa).

Residues 9–14 (GARGKV), 77–79 (GTT), and 104–107 (APNF) contribute to the NAD(+) site. The active-site Proton donor/acceptor is the His134. Position 135 (His135) interacts with (S)-2,3,4,5-tetrahydrodipicolinate. Residue Lys138 is the Proton donor of the active site. Residue 144–145 (GT) coordinates (S)-2,3,4,5-tetrahydrodipicolinate.

This sequence belongs to the DapB family.

The protein localises to the cytoplasm. It carries out the reaction (S)-2,3,4,5-tetrahydrodipicolinate + NAD(+) + H2O = (2S,4S)-4-hydroxy-2,3,4,5-tetrahydrodipicolinate + NADH + H(+). The enzyme catalyses (S)-2,3,4,5-tetrahydrodipicolinate + NADP(+) + H2O = (2S,4S)-4-hydroxy-2,3,4,5-tetrahydrodipicolinate + NADPH + H(+). It participates in amino-acid biosynthesis; L-lysine biosynthesis via DAP pathway; (S)-tetrahydrodipicolinate from L-aspartate: step 4/4. Its function is as follows. Catalyzes the conversion of 4-hydroxy-tetrahydrodipicolinate (HTPA) to tetrahydrodipicolinate. The sequence is that of 4-hydroxy-tetrahydrodipicolinate reductase from Nocardia farcinica (strain IFM 10152).